A 186-amino-acid chain; its full sequence is Der GTPase-activating protein YihI (186 aa).

A disordered region spans residues 42-77 (KAREDKKKRKHKGLASGSRHSAVEEKANKLQNEIKD). Positions 62-77 (SAVEEKANKLQNEIKD) are enriched in basic and acidic residues.

This sequence belongs to the YihI family. Interacts with Der.

In terms of biological role, a GTPase-activating protein (GAP) that modifies Der/EngA GTPase function. May play a role in ribosome biogenesis. In Haemophilus influenzae (strain ATCC 51907 / DSM 11121 / KW20 / Rd), this protein is Der GTPase-activating protein YihI.